The chain runs to 245 residues: Type II restriction enzyme MjaIV (245 aa).

The enzyme catalyses Endonucleolytic cleavage of DNA to give specific double-stranded fragments with terminal 5'-phosphates.. Functionally, a P subtype restriction enzyme that recognizes the double-stranded sequence 5'-GTNNAC-3'; the cleavage site is unknown. The chain is Type II restriction enzyme MjaIV (mjaIVR) from Methanocaldococcus jannaschii (strain ATCC 43067 / DSM 2661 / JAL-1 / JCM 10045 / NBRC 100440) (Methanococcus jannaschii).